The sequence spans 526 residues: Bifunctional purine biosynthesis protein PurH (526 aa).

Residues 15–161 (DVVPIRRALI…KNHANVAIVV (147 aa)) form the MGS-like domain.

This sequence belongs to the PurH family.

The catalysed reaction is (6R)-10-formyltetrahydrofolate + 5-amino-1-(5-phospho-beta-D-ribosyl)imidazole-4-carboxamide = 5-formamido-1-(5-phospho-D-ribosyl)imidazole-4-carboxamide + (6S)-5,6,7,8-tetrahydrofolate. It catalyses the reaction IMP + H2O = 5-formamido-1-(5-phospho-D-ribosyl)imidazole-4-carboxamide. The protein operates within purine metabolism; IMP biosynthesis via de novo pathway; 5-formamido-1-(5-phospho-D-ribosyl)imidazole-4-carboxamide from 5-amino-1-(5-phospho-D-ribosyl)imidazole-4-carboxamide (10-formyl THF route): step 1/1. It functions in the pathway purine metabolism; IMP biosynthesis via de novo pathway; IMP from 5-formamido-1-(5-phospho-D-ribosyl)imidazole-4-carboxamide: step 1/1. This is Bifunctional purine biosynthesis protein PurH from Leifsonia xyli subsp. xyli (strain CTCB07).